The chain runs to 924 residues: Alpha-actinin, sarcomeric (924 aa).

Residues 1 to 250 (MMMENGLSME…IMTYVSCYYH (250 aa)) form an actin-binding region. Calponin-homology (CH) domains follow at residues 34–138 (KQQK…LRFA) and 147–253 (MTAK…HAFQ). 4 Spectrin repeats span residues 251-395 (AFQG…TVSD), 396-510 (ISNS…RCQR), 511-631 (ICDQ…TAND), and 632-744 (MTRK…TMET). 2 consecutive EF-hand domains span residues 778 to 813 (EQLN…LGYS) and 819 to 854 (QGDL…ESTD). Ca(2+) contacts are provided by Asp-791, Asn-793, Thr-795, Arg-797, and Glu-802.

Belongs to the alpha-actinin family. In terms of assembly, homodimer; antiparallel. Interacts with Smn; the interaction occurs in adult thoracic tissues. In terms of tissue distribution, larval muscle isoform is expressed in the larval body wall, adult muscles of the head and abdomen and supercontractile muscles of the larva and adult. Adult muscle isoform accumulates within adult fibrillar and tubular muscles.

It is found in the cytoplasm. The protein localises to the myofibril. It localises to the sarcomere. The protein resides in the z line. Functionally, F-actin cross-linking protein which is thought to anchor actin to a variety of intracellular structures. This is a bundling protein. This Drosophila melanogaster (Fruit fly) protein is Alpha-actinin, sarcomeric (Actn).